The chain runs to 655 residues: Fructose-1,6-bisphosphatase class 3 (655 aa).

The protein belongs to the FBPase class 3 family. Mn(2+) is required as a cofactor.

It carries out the reaction beta-D-fructose 1,6-bisphosphate + H2O = beta-D-fructose 6-phosphate + phosphate. Its pathway is carbohydrate biosynthesis; gluconeogenesis. This is Fructose-1,6-bisphosphatase class 3 from Porphyromonas gingivalis (strain ATCC BAA-308 / W83).